The primary structure comprises 189 residues: MQGFFWKTLLVVALCGTSSSLAHRPLSYGEALELALSVYNSKAGEESLFRLLEAVPQPEWDPLSEGSQQLNFTIKETVCQVEEERPLEECGFQEDGVVLECTGYYFFGETPPVVVLTCVPVGGVEEEEEDEEEQKAEVEKDEEKEDEEKDRPKRVKRFKKFFKKLKNNVKKRVKKFFRKPRVIGVTIPF.

Residues 1-22 (MQGFFWKTLLVVALCGTSSSLA) form the signal peptide. A propeptide spanning residues 23 to 155 (HRPLSYGEAL…DEEKDRPKRV (133 aa)) is cleaved from the precursor. 2 cysteine pairs are disulfide-bonded: cysteine 79/cysteine 90 and cysteine 101/cysteine 118. Over residues 125 to 148 (EEEEEDEEEQKAEVEKDEEKEDEE) the composition is skewed to acidic residues. Residues 125–152 (EEEEEDEEEQKAEVEKDEEKEDEEKDRP) are disordered.

The protein belongs to the cathelicidin family. Expressed by the venom gland.

The protein resides in the secreted. It is found in the target cell membrane. Functionally, potent antimicrobial peptide against Gram-negative and Gram-positive bacteria. Adopts an amphipathic alpha helical conformation, that may allow to partition into the target membrane. Low hemolytic activities have been observed on mammalian cells. The polypeptide is Lutzicidin (Bothrops lutzi (Sertao lancehead)).